The following is a 114-amino-acid chain: uncharacterized protein (114 aa).

A run of 2 helical transmembrane segments spans residues 58–78 and 94–114; these read CLLG…FFLL and SISY…FCLA.

The protein localises to the membrane. This is an uncharacterized protein from Saccharomyces cerevisiae (strain ATCC 204508 / S288c) (Baker's yeast).